The primary structure comprises 307 residues: Ribosomal RNA small subunit methyltransferase H (307 aa).

S-adenosyl-L-methionine is bound by residues 32-34 (GGH), Asp-52, Phe-78, Asp-99, and Gln-106.

It belongs to the methyltransferase superfamily. RsmH family.

It localises to the cytoplasm. It carries out the reaction cytidine(1402) in 16S rRNA + S-adenosyl-L-methionine = N(4)-methylcytidine(1402) in 16S rRNA + S-adenosyl-L-homocysteine + H(+). Specifically methylates the N4 position of cytidine in position 1402 (C1402) of 16S rRNA. In Acinetobacter baumannii (strain SDF), this protein is Ribosomal RNA small subunit methyltransferase H.